The sequence spans 567 residues: Low-affinity glucose transporter HXT3 (567 aa).

The span at methionine 1–methionine 29 shows a compositional bias: polar residues. Residues methionine 1–asparagine 30 are disordered. Topologically, residues methionine 1 to glycine 57 are cytoplasmic. Position 23 is a phosphoserine (serine 23). Residues alanine 58–tryptophan 78 form a helical membrane-spanning segment. The Extracellular segment spans residues aspartate 79–glycine 113. The helical transmembrane segment at leucine 114–glycine 134 threads the bilayer. The Cytoplasmic portion of the chain corresponds to aspartate 135–lysine 140. The chain crosses the membrane as a helical span at residues methionine 141–isoleucine 161. The Extracellular portion of the chain corresponds to asparagine 162–arginine 171. The helical transmembrane segment at isoleucine 172–valine 192 threads the bilayer. The Cytoplasmic portion of the chain corresponds to alanine 193–arginine 198. The chain crosses the membrane as a helical span at residues glycine 199–threonine 219. The Extracellular segment spans residues asparagine 220–arginine 233. Residue asparagine 225 is glycosylated (N-linked (GlcNAc...) asparagine). A helical membrane pass occupies residues valine 234 to proline 254. Topologically, residues glutamate 255 to aspartate 337 are cytoplasmic. Residues asparagine 338 to serine 354 traverse the membrane as a helical segment. Residues aspartate 355–serine 360 are Extracellular-facing. Residues isoleucine 361–valine 378 form a helical membrane-spanning segment. The Cytoplasmic portion of the chain corresponds to aspartate 379 to asparagine 385. Residues cysteine 386 to valine 406 traverse the membrane as a helical segment. The Extracellular portion of the chain corresponds to threonine 407–valine 428. A glycan (N-linked (GlcNAc...) asparagine) is linked at asparagine 416. The chain crosses the membrane as a helical span at residues phenylalanine 429 to isoleucine 449. Residues serine 450–threonine 466 are Cytoplasmic-facing. The chain crosses the membrane as a helical span at residues alanine 467–isoleucine 487. A topological domain (extracellular) is located at residue asparagine 488. The chain crosses the membrane as a helical span at residues phenylalanine 489–phenylalanine 509. Topologically, residues valine 510–lysine 567 are cytoplasmic.

This sequence belongs to the major facilitator superfamily. Sugar transporter (TC 2.A.1.1) family.

The protein localises to the membrane. Low-affinity glucose transporter. The sequence is that of Low-affinity glucose transporter HXT3 (HXT3) from Saccharomyces cerevisiae (strain ATCC 204508 / S288c) (Baker's yeast).